A 78-amino-acid polypeptide reads, in one-letter code: MIIPWQQVDSETLDNLLEAFVLREGTDYGEHERSLEQKVEDVRRQLVSGEAVLVWSELHETINIMPRGAFRAGAEELP.

The protein belongs to the UPF0270 family.

The polypeptide is UPF0270 protein YE3952 (Yersinia enterocolitica serotype O:8 / biotype 1B (strain NCTC 13174 / 8081)).